An 808-amino-acid chain; its full sequence is Anaphase-promoting complex subunit 4 (808 aa).

A Phosphotyrosine modification is found at Tyr469. A phosphoserine mark is found at Ser757 and Ser758. Lys772 participates in a covalent cross-link: Glycyl lysine isopeptide (Lys-Gly) (interchain with G-Cter in SUMO2). Phosphoserine occurs at positions 777 and 779. Lys798 is covalently cross-linked (Glycyl lysine isopeptide (Lys-Gly) (interchain with G-Cter in SUMO2)).

The protein belongs to the APC4 family. The mammalian APC/C is composed at least of 14 distinct subunits ANAPC1, ANAPC2, CDC27/APC3, ANAPC4, ANAPC5, CDC16/APC6, ANAPC7, CDC23/APC8, ANAPC10, ANAPC11, CDC26/APC12, ANAPC13, ANAPC15 and ANAPC16 that assemble into a complex of at least 19 chains with a combined molecular mass of around 1.2 MDa; APC/C interacts with FZR1 and FBXO5. In the context of the APC/C complex, directly interacts with UBE2S. Interacts with FBXO43.

Its subcellular location is the nucleus. Its pathway is protein modification; protein ubiquitination. Functionally, component of the anaphase promoting complex/cyclosome (APC/C), a cell cycle-regulated E3 ubiquitin ligase that controls progression through mitosis and the G1 phase of the cell cycle. The APC/C complex acts by mediating ubiquitination and subsequent degradation of target proteins: it mainly mediates the formation of 'Lys-11'-linked polyubiquitin chains and, to a lower extent, the formation of 'Lys-48'- and 'Lys-63'-linked polyubiquitin chains. The APC/C complex catalyzes assembly of branched 'Lys-11'-/'Lys-48'-linked branched ubiquitin chains on target proteins. In Homo sapiens (Human), this protein is Anaphase-promoting complex subunit 4 (ANAPC4).